Reading from the N-terminus, the 343-residue chain is Probable siderophore transport system permease protein YfhA (343 aa).

A run of 9 helical transmembrane segments spans residues 15–35 (WIVFLVLLGLTAAVLIISAGL), 69–89 (ILTALCAGVCLAAAGAILQGL), 97–117 (PDIIGITGGAAVAVVLLMMFF), 130–150 (WLPAAAFIGASAVGLIVYLLA), 160–180 (LVLIGIGFSMSAQAMTTLLMI), 204–224 (QHVKIAIILSVILLFICFVAL), 249–269 (FFLLLLSTALTGCAVSVAGTI), 289–309 (GALLPASALIGALLVLTADIV), and 317–337 (VEVPAGVFTAAIGAPYFIYLL).

This sequence belongs to the binding-protein-dependent transport system permease family. FecCD subfamily. As to quaternary structure, the complex is composed of one ATP-binding protein (YusV), two transmembrane proteins (YfiZ and YfhA) and a solute-binding protein (YfiY).

The protein resides in the cell membrane. In terms of biological role, part of the ABC transporter complex YfiYZ/YfhA/YusV involved in import of the iron-hydroxamate siderophores schizokinen, arthrobactin and corprogen. The protein is Probable siderophore transport system permease protein YfhA (yfhA) of Bacillus subtilis (strain 168).